Consider the following 448-residue polypeptide: Rhodanese-like domain-containing protein 8, chloroplastic (448 aa).

The transit peptide at 1–23 (MRVSPAATLSVSLTTPLPITLTK) directs the protein to the chloroplast. The Rhodanese domain maps to 220-323 (SGKSYILLDV…YLKEEGTAEW (104 aa)). The Cysteine persulfide intermediate role is filled by C283.

It is found in the plastid. Its subcellular location is the chloroplast. This chain is Rhodanese-like domain-containing protein 8, chloroplastic (STR8), found in Arabidopsis thaliana (Mouse-ear cress).